Here is a 181-residue protein sequence, read N- to C-terminus: Cyclic AMP-dependent transcription factor ATF-3 (181 aa).

A Glycyl lysine isopeptide (Lys-Gly) (interchain with G-Cter in SUMO2) cross-link involves residue Lys-78. Positions 86–149 (DERKKRRRER…QHLIYMLNLH (64 aa)) constitute a bZIP domain. Residues 88–110 (RKKRRRERNKIAAAKCRNKKKEK) are basic motif. The tract at residues 114–142 (LQKESEKLESVNAELKAQIEELKNEKQHL) is leucine-zipper. Position 162 is a phosphothreonine (Thr-162). Lys-175 participates in a covalent cross-link: Glycyl lysine isopeptide (Lys-Gly) (interchain with G-Cter in SUMO2).

The protein belongs to the bZIP family. ATF subfamily. In terms of assembly, binds DNA as a homodimer or a heterodimer. Interacts with KAT5; promoting KAT5 autoacetylation and KAT5 deubiquitination by USP7.

Its subcellular location is the nucleus. Its function is as follows. This protein binds the cAMP response element (CRE) (consensus: 5'-GTGACGT[AC][AG]-3'), a sequence present in many viral and cellular promoters. Represses transcription from promoters with ATF sites. It may repress transcription by stabilizing the binding of inhibitory cofactors at the promoter. Activates transcription presumably by sequestering inhibitory cofactors away from the promoters. Functionally, stress-induced isoform, counteracts the transcriptional repression of isoform 1. This chain is Cyclic AMP-dependent transcription factor ATF-3, found in Homo sapiens (Human).